Consider the following 430-residue polypeptide: Pre-B-cell leukemia transcription factor 1 (430 aa).

The segment at 1 to 40 is disordered; it reads MDEQPRLMHSHAGVGMAGHPGLSQHLQDGAGGTEGEGGRK. Residues 38–232 enclose the PBC domain; sequence GRKQDIGDIL…VMILRSRFLD (195 aa). Residues 45–124 are PBC-A; the sequence is DILQQIMTIT…EGVAGPEKGG (80 aa). Residues 127–232 are PBC-B; it reads AAAAAAAAAS…VMILRSRFLD (106 aa). Residues 233 to 295 constitute a DNA-binding region (homeobox; TALE-type); sequence ARRKRRNFNK…NKRIRYKKNI (63 aa). 2 disordered regions span residues 317 to 338 and 395 to 430; these read SAHG…SSSF and SPQG…DTSN. The span at 323 to 338 shows a compositional bias: low complexity; sequence ANSPSTPNSAGSSSSF. The segment covering 407-418 has biased composition (polar residues); it reads DATTPSSVTSPT.

This sequence belongs to the TALE/PBX homeobox family. In terms of assembly, forms a heterodimer with MEIS1 which binds DNA. The PBX1-MEIS1 heterodimer binds a cAMP-responsive sequence in CYP17. It also binds a consensus region in the SOX3 promoter. PBX1 forms heterotrimers with MEIS1 and a number of HOX proteins including HOXA9, HOXD4, HOXD9 and HOXD10. Forms heterodimers with HOXA1, HOXA5, HOXB7 and HOXB8 which bind the 5'-TGATTGAT-3' consensus sequence. Also forms heterodimers with HOXA5, HOXB7, HOXB8, HOXC8 and HOXD4 which bind the 5'-ATCAATCAA-3' consensus sequence. Interacts with PBXIP1. Interacts with TLX1. Interacts with FOXC1. Interacts with MN1. As to quaternary structure, interacts with MEIS2 isoform 4, SP1, SP3 and KLF4. Part of a PDX1:PBX1b:MEIS2B complex; PBX1b recruits MEIS2B to the complex. In terms of tissue distribution, expressed in the kidney. Expressed in the endothelial cells of the glomeruli and interstitium (at protein level). Expressed in all tissues except in cells of the B and T lineage. Expressed strongly in kidney and brain.

The protein localises to the nucleus. In terms of biological role, transcription factor which binds the DNA sequence 5'-TGATTGAT-3' as part of a heterodimer with HOX proteins such as HOXA1, HOXA5, HOXB7 and HOXB8. Binds to the DNA sequence 5'-TGATTGAC-3' in complex with a nuclear factor which is not a class I HOX protein. Has also been shown to bind the DNA sequence 5'-ATCAATCAA-3' cooperatively with HOXA5, HOXB7, HOXB8, HOXC8 and HOXD4. Acts as a transcriptional activator of PF4 in complex with MEIS1. Also activates transcription of SOX3 in complex with MEIS1 by binding to the 5'-TGATTGAC-3' consensus sequence. In natural killer cells, binds to the NFIL3 promoter and acts as a transcriptional activator of NFIL3, promoting natural killer cell development. Plays a role in the cAMP-dependent regulation of CYP17A1 gene expression via its cAMP-regulatory sequence (CRS1). Probably in complex with MEIS2, involved in transcriptional regulation by KLF4. Acts as a transcriptional activator of NKX2-5 and a transcriptional repressor of CDKN2B. Together with NKX2-5, required for spleen development through a mechanism that involves CDKN2B repression. As part of a PDX1:PBX1b:MEIS2B complex in pancreatic acinar cells, is involved in the transcriptional activation of the ELA1 enhancer; the complex binds to the enhancer B element and cooperates with the transcription factor 1 complex (PTF1) bound to the enhancer A element. The polypeptide is Pre-B-cell leukemia transcription factor 1 (PBX1) (Homo sapiens (Human)).